Consider the following 304-residue polypeptide: Porphobilinogen deaminase (304 aa).

Cys240 is modified (S-(dipyrrolylmethanemethyl)cysteine).

It belongs to the HMBS family. In terms of assembly, monomer. Requires dipyrromethane as cofactor.

It catalyses the reaction 4 porphobilinogen + H2O = hydroxymethylbilane + 4 NH4(+). It functions in the pathway porphyrin-containing compound metabolism; protoporphyrin-IX biosynthesis; coproporphyrinogen-III from 5-aminolevulinate: step 2/4. Tetrapolymerization of the monopyrrole PBG into the hydroxymethylbilane pre-uroporphyrinogen in several discrete steps. In Xanthomonas campestris pv. campestris (strain ATCC 33913 / DSM 3586 / NCPPB 528 / LMG 568 / P 25), this protein is Porphobilinogen deaminase.